The chain runs to 95 residues: uncharacterized protein (95 aa).

The span at 1–12 (MQNFMNNLSGGS) shows a compositional bias: low complexity. The segment at 1 to 27 (MQNFMNNLSGGSNKEGGEKSNDFLSSA) is disordered.

This is an uncharacterized protein from Schizosaccharomyces pombe (strain 972 / ATCC 24843) (Fission yeast).